The primary structure comprises 216 residues: 3-isopropylmalate dehydratase small subunit (216 aa).

This sequence belongs to the LeuD family. LeuD type 1 subfamily. Heterodimer of LeuC and LeuD.

It catalyses the reaction (2R,3S)-3-isopropylmalate = (2S)-2-isopropylmalate. The protein operates within amino-acid biosynthesis; L-leucine biosynthesis; L-leucine from 3-methyl-2-oxobutanoate: step 2/4. Functionally, catalyzes the isomerization between 2-isopropylmalate and 3-isopropylmalate, via the formation of 2-isopropylmaleate. This Ralstonia nicotianae (strain ATCC BAA-1114 / GMI1000) (Ralstonia solanacearum) protein is 3-isopropylmalate dehydratase small subunit.